A 431-amino-acid chain; its full sequence is Protein EARLY STARVATION 1, chloroplastic (431 aa).

The N-terminal 19 residues, 1–19, are a transit peptide targeting the chloroplast; it reads MAACSRGLVARPFDLTARG. Disordered regions lie at residues 65–126 and 403–431; these read GNKP…DTGI and GVYP…SPLE. Positions 415–431 are enriched in pro residues; it reads PAPPSDDPPGMPPSPLE.

This sequence belongs to the ESV1 family.

The protein resides in the plastid. The protein localises to the chloroplast stroma. Binds preferentially to highly ordered alpha-glucans, such as starch and crystalline maltodextrins. Involved in the organization of the starch granule matrix, thus influencing starch turnover by modulating the accessibility of starch polymers to modifying and degrading enzymes. Required for the control of starch degradation in leaves and starch distribution in nonphotosynthetic parts. Promotes gravitropic responses, negative in shoots but positive in roots, by facilitating starch granules (statoliths) formation in hypocotyls and roots columella. Facilitates tight packing of starch granules in grains. This Oryza sativa subsp. japonica (Rice) protein is Protein EARLY STARVATION 1, chloroplastic.